Reading from the N-terminus, the 287-residue chain is Acetyl-coenzyme A carboxylase carboxyl transferase subunit beta (287 aa).

The 260-residue stretch at 28–287 (LWKKCPKCEN…ILSLLTNKVA (260 aa)) folds into the CoA carboxyltransferase N-terminal domain. Zn(2+) is bound by residues Cys-32, Cys-35, Cys-51, and Cys-54. The segment at 32 to 54 (CPKCENVLYRPELEKNLDVCPKC) adopts a C4-type zinc-finger fold.

This sequence belongs to the AccD/PCCB family. As to quaternary structure, acetyl-CoA carboxylase is a heterohexamer composed of biotin carboxyl carrier protein (AccB), biotin carboxylase (AccC) and two subunits each of ACCase subunit alpha (AccA) and ACCase subunit beta (AccD). Zn(2+) is required as a cofactor.

The protein resides in the cytoplasm. It catalyses the reaction N(6)-carboxybiotinyl-L-lysyl-[protein] + acetyl-CoA = N(6)-biotinyl-L-lysyl-[protein] + malonyl-CoA. It functions in the pathway lipid metabolism; malonyl-CoA biosynthesis; malonyl-CoA from acetyl-CoA: step 1/1. Functionally, component of the acetyl coenzyme A carboxylase (ACC) complex. Biotin carboxylase (BC) catalyzes the carboxylation of biotin on its carrier protein (BCCP) and then the CO(2) group is transferred by the transcarboxylase to acetyl-CoA to form malonyl-CoA. The protein is Acetyl-coenzyme A carboxylase carboxyl transferase subunit beta of Marinomonas sp. (strain MWYL1).